Here is a 1273-residue protein sequence, read N- to C-terminus: MSTGAFYISSLLEKMTSSDKDFSPKSLGGSRVLDPLPWLQILAAITDWISGDRTQDLALPRFMATSDLMSELQKDSIQLDEDSERKVVRTLLRLLEDRSGEVQNLAVKCLGPLVGKVKEYQVENIVDTLCANMRSDKEQLRDIAGIGLKTVLSELPPAATGSGLAISVCRKITGQLTSAIAQQEDVAVQLEALDILSDMLSRLGAPLGTFHASLLHCLLPQLSSPRLAVRKRTVVALGHLAAACSTDLFVELADHLVDRLPGPRAPASPAAIRTLIQCLGSVGRQAGHRLGAHLDRLMPLVEEFCNLDDDELRESCLQAFEAFLRKCPKEMDPHVPNVTSLCLQYMKHDPNYNHDSDEEEQMETEDSEFSEQESEDEYSDDDDMSWKVRRAAAKCMAALISSRPDLLPDFHCTLAPALIRCFKEREENVKADIFGAYIMLLRHTRPPKGWLEAVEEPTQTGRNLNMLRAQVPLVMKALQRQLKDRNVRTRQGCFNLFTELAGVLPGCLAEHMTVLVSGIVFSLADYSSSSTIRMDALAFLQGLLGTEPAEAFHPHLPTLLPPVMACVADPFYKVAAEALLVLQELVRTLWPLDRPRLLDPEPYVGEMSTATLARLRATDLDQEVKERAISCVGHLVGHLGDRLGDDLEPTLLLLLDRLRNEITRLPAVKALTLVAVSPLRLDLQPILAEALPILASFLRKNQRALRLATLAALDALAQSQGLGLPPPAVRSVLAELPALVSENDMHVAQLAVDFLTTVTQTQPASLVEVSGPVLEELLQLLHSPLLPAGVLAATEGFLQALVGTRPPCVEYSELISLLTAPVYNQVGDGGPGLHKQVFHSLARCVAALSAACPQEAAGTASRLVCDARSPHSSTGVKVLAFLSLAEVGQVAGPGPQRELKTVLLEALGSPSEDVRAAAAYALGRVGAGNLPDFLPFLLAQIEAQPRRQYLLLHALREALGAAQPDNLKPYVEDVWALLFQRCESPEEGTRCVVAECIGKLVFVNPPFLLPRFRKQLAAGQPYTRSTVITAVKFLISDQPHSIDPLLKSFIAEFMESLQDPDLNVRRATLTFFNSAVHNKPSLVRDLLDDILPLLYQETKIRRDLIREVEMGPFKHTVDDGLDVRKAAFECMYSLLESCLGQLDICEFLNHVEDGLKDHYDIRMLTFIMLARLAALCPAPVLQRVDRLIEPLRATCTAKVKAGSVKQELEKQDELKRSAMRAVAALMTNPEVRKSPSVADFSTQIRSNPELATLFESIQKDTASGPSMDSMELS.

S2 bears the N-acetylserine mark. 26 HEAT repeats span residues 2 to 36 (STGA…LDPL), 37 to 74 (PWLQ…ELQK), 82 to 119 (DSER…KVKE), 121 to 157 (QVEN…ELPP), 167 to 205 (SVCR…RLGA), 209 to 246 (TFHA…ACST), 248 to 284 (LFVE…SVGR), 292 to 329 (AHLD…KCPK), 364 to 405 (TEDS…SRPD), 409 to 446 (DFHC…HTRP), 469 to 506 (AQVP…VLPG), 554 to 591 (PHLP…TLWP), 602 to 641 (PYVG…HLGD), 685 to 722 (PILA…SQGL), 727 to 764 (PAVR…TQPA), 768 to 807 (EVSG…TRPP), 809 to 850 (VEYS…ALSA), 894 to 931 (GPQR…GNLP), 933 to 968 (FLPF…DNLK), 970 to 1003 (YVED…LVFV), 1004 to 1040 (NPPF…DQPH), 1044 to 1081 (PLLK…NKPS), 1085 to 1121 (DLLD…DDGL), 1142 to 1178 (LDIC…LCPA), 1194 to 1231 (TCTA…NPEV), and 1241 to 1273 (STQI…MELS). A disordered region spans residues 352–383 (YNHDSDEEEQMETEDSEFSEQESEDEYSDDDD). Acidic residues predominate over residues 356 to 383 (SDEEEQMETEDSEFSEQESEDEYSDDDD).

The protein belongs to the CAND family. Binds TBP, CNOT3 and UBE3C. In terms of processing, ubiquitinated and targeted for proteasomal degradation. In terms of tissue distribution, detected in heart and skeletal muscle.

Its subcellular location is the nucleus. In terms of biological role, probable assembly factor of SCF (SKP1-CUL1-F-box protein) E3 ubiquitin ligase complexes that promotes the exchange of the substrate-recognition F-box subunit in SCF complexes, thereby playing a key role in the cellular repertoire of SCF complexes. This Rattus norvegicus (Rat) protein is Cullin-associated NEDD8-dissociated protein 2 (Cand2).